Consider the following 364-residue polypeptide: Inactive protein RESTRICTED TEV MOVEMENT 2 (364 aa).

Residues 14–121 form the sHSP domain; that stretch reads VQYEDFVPKS…LPETSRTEAA (108 aa). Residues 129 to 133 form an A-1 repeat; that stretch reads LEEKR. The interval 129 to 220 is 6 X 5 AA repeats A of L-E-E-[SKR]-[ERK]; that stretch reads LEEKRLLEES…LEERRLEERK (92 aa). One copy of the A-2 repeat lies at 135–139; it reads LEESR. Residues 156–160 form an A-3 repeat; it reads LEEKE. A B-1 repeat occupies 163–176; it reads IRKLQEEAKAKEEA. Residues 163-206 are 3 X 14 AA repeats B of [IMA]-[RK]-K-L-Q-E-E-A-K-A-K-E-[EK]-[LA]; it reads IRKLQEEAKAKEEAEMRKLQEEAKAKEEAAAKKLQEEIEAKEKL. The B-2 repeat unit spans residues 178-191; it reads MRKLQEEAKAKEEA. Residues 193–205 form a B-3 repeat; it reads AKKLQEEIEAKEK. One copy of the A-4 repeat lies at 206–210; it reads LEERK. Residues 211 to 215 form an A-5 repeat; it reads LEERR. An A-6 repeat occupies 216-220; that stretch reads LEERK. The chain crosses the membrane as a helical span at residues 322–342; that stretch reads LMMNVGVAALVIFALGAYVSY. The interval 345-364 is disordered; sequence CSSSSSSSSPSSSSSSTKPE. Over residues 346–364 the composition is skewed to low complexity; it reads SSSSSSSSPSSSSSSTKPE.

Belongs to the small heat shock protein (HSP20) family.

Its subcellular location is the cell membrane. Functionally, seems to not be involved in heat resistance. Unable to mediate restriction of long-distance movement of the pathogenic tobacco etch virus (TEV) without causing a hypersensitive response or inducing systemic acquired resistance. This is Inactive protein RESTRICTED TEV MOVEMENT 2 (RTM2) from Arabidopsis thaliana (Mouse-ear cress).